Consider the following 500-residue polypeptide: Glycerol kinase (500 aa).

Position 16 (T16) interacts with ADP. Residues T16 and T17 each coordinate ATP. Residue T16 coordinates sn-glycerol 3-phosphate. ADP is bound at residue R20. Positions 86, 87, 138, and 243 each coordinate sn-glycerol 3-phosphate. 5 residues coordinate glycerol: R86, E87, Y138, D243, and Q244. Positions 265 and 313 each coordinate ADP. ATP contacts are provided by T265, G313, Q317, and G414. ADP-binding residues include G414 and N418.

This sequence belongs to the FGGY kinase family.

The catalysed reaction is glycerol + ATP = sn-glycerol 3-phosphate + ADP + H(+). It functions in the pathway polyol metabolism; glycerol degradation via glycerol kinase pathway; sn-glycerol 3-phosphate from glycerol: step 1/1. With respect to regulation, inhibited by fructose 1,6-bisphosphate (FBP). Functionally, key enzyme in the regulation of glycerol uptake and metabolism. Catalyzes the phosphorylation of glycerol to yield sn-glycerol 3-phosphate. The polypeptide is Glycerol kinase (Trichormus variabilis (strain ATCC 29413 / PCC 7937) (Anabaena variabilis)).